Here is a 138-residue protein sequence, read N- to C-terminus: Large ribosomal subunit protein bL17 (138 aa).

The protein belongs to the bacterial ribosomal protein bL17 family. As to quaternary structure, part of the 50S ribosomal subunit. Contacts protein L32.

The protein is Large ribosomal subunit protein bL17 of Buchnera aphidicola subsp. Schizaphis graminum (strain Sg).